The primary structure comprises 429 residues: 3-phosphoshikimate 1-carboxyvinyltransferase (429 aa).

Lys-22, Ser-23, and Arg-27 together coordinate 3-phosphoshikimate. Phosphoenolpyruvate is bound at residue Lys-22. Residues Gly-94 and Arg-122 each coordinate phosphoenolpyruvate. Residues Ser-167, Gln-169, Asp-315, and Lys-342 each coordinate 3-phosphoshikimate. Gln-169 is a binding site for phosphoenolpyruvate. Asp-315 (proton acceptor) is an active-site residue. Phosphoenolpyruvate-binding residues include Arg-346 and Arg-388.

The protein belongs to the EPSP synthase family. In terms of assembly, monomer.

The protein localises to the cytoplasm. It catalyses the reaction 3-phosphoshikimate + phosphoenolpyruvate = 5-O-(1-carboxyvinyl)-3-phosphoshikimate + phosphate. It functions in the pathway metabolic intermediate biosynthesis; chorismate biosynthesis; chorismate from D-erythrose 4-phosphate and phosphoenolpyruvate: step 6/7. Functionally, catalyzes the transfer of the enolpyruvyl moiety of phosphoenolpyruvate (PEP) to the 5-hydroxyl of shikimate-3-phosphate (S3P) to produce enolpyruvyl shikimate-3-phosphate and inorganic phosphate. The protein is 3-phosphoshikimate 1-carboxyvinyltransferase of Geobacter sulfurreducens (strain ATCC 51573 / DSM 12127 / PCA).